A 120-amino-acid polypeptide reads, in one-letter code: Large ribosomal subunit protein uL22 (120 aa).

The protein belongs to the universal ribosomal protein uL22 family. Part of the 50S ribosomal subunit.

This protein binds specifically to 23S rRNA; its binding is stimulated by other ribosomal proteins, e.g. L4, L17, and L20. It is important during the early stages of 50S assembly. It makes multiple contacts with different domains of the 23S rRNA in the assembled 50S subunit and ribosome. Its function is as follows. The globular domain of the protein is located near the polypeptide exit tunnel on the outside of the subunit, while an extended beta-hairpin is found that lines the wall of the exit tunnel in the center of the 70S ribosome. The sequence is that of Large ribosomal subunit protein uL22 from Rippkaea orientalis (strain PCC 8801 / RF-1) (Cyanothece sp. (strain PCC 8801)).